A 240-amino-acid polypeptide reads, in one-letter code: Methylthioribulose-1-phosphate dehydratase (240 aa).

Cys-99 is a binding site for substrate. Zn(2+) contacts are provided by His-116 and His-118. Residue Glu-145 is the Proton donor/acceptor of the active site. His-201 contributes to the Zn(2+) binding site.

Belongs to the aldolase class II family. MtnB subfamily. Requires Zn(2+) as cofactor.

It is found in the cytoplasm. It carries out the reaction 5-(methylsulfanyl)-D-ribulose 1-phosphate = 5-methylsulfanyl-2,3-dioxopentyl phosphate + H2O. Its pathway is amino-acid biosynthesis; L-methionine biosynthesis via salvage pathway; L-methionine from S-methyl-5-thio-alpha-D-ribose 1-phosphate: step 2/6. Catalyzes the dehydration of methylthioribulose-1-phosphate (MTRu-1-P) into 2,3-diketo-5-methylthiopentyl-1-phosphate (DK-MTP-1-P). This chain is Methylthioribulose-1-phosphate dehydratase, found in Paracoccidioides lutzii (strain ATCC MYA-826 / Pb01) (Paracoccidioides brasiliensis).